We begin with the raw amino-acid sequence, 279 residues long: Large ribosomal subunit protein uL24m (279 aa).

A mitochondrion-targeting transit peptide spans 1–31 (MRDLRKLIPRLRGPGTNVLKMKKPLPLHMRT). Over residues 34-51 (REHLNKSDPTVKDDKSAK) the composition is skewed to basic and acidic residues. Residues 34 to 56 (REHLNKSDPTVKDDKSAKPELPF) are disordered. The region spanning 70–100 (KGDYVYVHQGPLKGKWGRVVETNKYTNGITI) is the KOW domain. Residues 185 to 204 (PRPKTEDKPKDPEGKLDTKN) are disordered. Residues 187–202 (PKTEDKPKDPEGKLDT) show a composition bias toward basic and acidic residues.

The protein belongs to the universal ribosomal protein uL24 family. Component of the mitochondrial large ribosomal subunit (mt-LSU). Mature yeast 74S mitochondrial ribosomes consist of a small (37S) and a large (54S) subunit. The 37S small subunit contains a 15S ribosomal RNA (15S mt-rRNA) and at least 32 different proteins. The 54S large subunit contains a 21S rRNA (21S mt-rRNA) and at least 45 different proteins. uL24m forms the wall of the exit tunnel.

It localises to the mitochondrion. Component of the mitochondrial ribosome (mitoribosome), a dedicated translation machinery responsible for the synthesis of mitochondrial genome-encoded proteins, including at least some of the essential transmembrane subunits of the mitochondrial respiratory chain. The mitoribosomes are attached to the mitochondrial inner membrane and translation products are cotranslationally integrated into the membrane. The sequence is that of Large ribosomal subunit protein uL24m (mrpl40) from Schizosaccharomyces pombe (strain 972 / ATCC 24843) (Fission yeast).